Consider the following 208-residue polypeptide: MLYDQIKNNKTSSYATFIPMVVEQHSRGERSYDIYSRLLKERIIFITGAIEDNMANNIVAQILFLEAENPEKDIFLYINSPGGIITSGMSIYDTMQFVKPEISTICLGQACSMAALLLTSGAKGKRFCLPNSKVMIHQPLGGYQGQASDIAIHAREIMEMKKKLNKLMSFHTGQSIKKINKDTERDCFLSANQSIKYGLIDFILSQRQ.

Ser112 functions as the Nucleophile in the catalytic mechanism. The active site involves His137.

This sequence belongs to the peptidase S14 family. In terms of assembly, fourteen ClpP subunits assemble into 2 heptameric rings which stack back to back to give a disk-like structure with a central cavity, resembling the structure of eukaryotic proteasomes.

Its subcellular location is the cytoplasm. The catalysed reaction is Hydrolysis of proteins to small peptides in the presence of ATP and magnesium. alpha-casein is the usual test substrate. In the absence of ATP, only oligopeptides shorter than five residues are hydrolyzed (such as succinyl-Leu-Tyr-|-NHMec, and Leu-Tyr-Leu-|-Tyr-Trp, in which cleavage of the -Tyr-|-Leu- and -Tyr-|-Trp bonds also occurs).. In terms of biological role, cleaves peptides in various proteins in a process that requires ATP hydrolysis. Has a chymotrypsin-like activity. Plays a major role in the degradation of misfolded proteins. This is ATP-dependent Clp protease proteolytic subunit from Buchnera aphidicola subsp. Acyrthosiphon pisum (strain APS) (Acyrthosiphon pisum symbiotic bacterium).